A 190-amino-acid chain; its full sequence is Cytidylate kinase (190 aa).

7–15 (GKIGSGKST) is an ATP binding site.

It belongs to the cytidylate kinase family. Type 2 subfamily.

The protein localises to the cytoplasm. It carries out the reaction CMP + ATP = CDP + ADP. The enzyme catalyses dCMP + ATP = dCDP + ADP. The protein is Cytidylate kinase of Thermoplasma volcanium (strain ATCC 51530 / DSM 4299 / JCM 9571 / NBRC 15438 / GSS1).